An 80-amino-acid chain; its full sequence is Defensin-like protein 276 (80 aa).

Positions 1-24 (MSGQKYQLVSLLLIICLLFSQSTA) are cleaved as a signal peptide. Cystine bridges form between cysteine 27-cysteine 67, cysteine 33-cysteine 55, cysteine 39-cysteine 65, and cysteine 43-cysteine 66.

Belongs to the DEFL family.

Its subcellular location is the secreted. In Arabidopsis thaliana (Mouse-ear cress), this protein is Defensin-like protein 276.